A 452-amino-acid polypeptide reads, in one-letter code: MMITLRKLPLAVAVAAGVMSAQAMAVDFHGYARSGIGWTGSGGEQQCFQVTGAQSKYRLGNECETYAELKLGQEVWKEGDKSFYFDTNVAYSVNQQNDWESTDPAFREANVQGKNLIEWLPGSTIWAGKRFYQRHDVHMIDFYYWDISGPGAGIENIDLGFGKLSLAATRSTEAGGSYTFSSQNIYDEVKDTANDVFDVRLAGLQTNPDGVLELGVDYGRANTTDGYKLVDGASKDGWMFTAEHTQSMLKGYNKFVVQYATDAMTTQGKGQARGSDGSSSFTEELPDGTKINYANKVINNNGDMWRILDHGAISLGDKWGLMYVGMYQNIDWDNNLGTEWWTVGVRPMYKWTPIMSTLLEVGYDNVKSQQTGDRNNQYKITLAQQWQAGDSIWSRPAIRIFATYAKWDEKWGYIKDGDNISRYAAATNSGISTNSRGDSDEWTFGAQMEIWW.

The first 25 residues, 1–25 (MMITLRKLPLAVAVAAGVMSAQAMA), serve as a signal peptide directing secretion.

Belongs to the porin LamB (TC 1.B.3) family. As to quaternary structure, homotrimer formed of three 18-stranded antiparallel beta-barrels, containing three independent channels.

It is found in the cell outer membrane. It catalyses the reaction beta-maltose(in) = beta-maltose(out). Its function is as follows. Involved in the transport of maltose and maltodextrins. The polypeptide is Maltoporin (Salmonella paratyphi A (strain ATCC 9150 / SARB42)).